Reading from the N-terminus, the 275-residue chain is Ribosomal protein L11 methyltransferase (275 aa).

S-adenosyl-L-methionine is bound by residues Thr-130, Gly-151, Asp-172, and Asn-213.

This sequence belongs to the methyltransferase superfamily. PrmA family.

It localises to the cytoplasm. The enzyme catalyses L-lysyl-[protein] + 3 S-adenosyl-L-methionine = N(6),N(6),N(6)-trimethyl-L-lysyl-[protein] + 3 S-adenosyl-L-homocysteine + 3 H(+). Methylates ribosomal protein L11. The protein is Ribosomal protein L11 methyltransferase of Wolinella succinogenes (strain ATCC 29543 / DSM 1740 / CCUG 13145 / JCM 31913 / LMG 7466 / NCTC 11488 / FDC 602W) (Vibrio succinogenes).